Here is a 143-residue protein sequence, read N- to C-terminus: MMLIPKKVKFRKQHRPNRKGMSGCGTRIVFGDYGIQALSRAYVTNRQVESARIAMTRHIRRGGRVWINIYPDRPLTKKPAETRMGSGKGSPEYWVANIRPGRIMFEVSGVSESLAKEALMRAIHKLPLRARIVERQEFDDAGL.

It belongs to the universal ribosomal protein uL16 family. As to quaternary structure, part of the 50S ribosomal subunit.

Binds 23S rRNA and is also seen to make contacts with the A and possibly P site tRNAs. The protein is Large ribosomal subunit protein uL16 of Tropheryma whipplei (strain TW08/27) (Whipple's bacillus).